A 123-amino-acid chain; its full sequence is Thioredoxin H-type 1 (123 aa).

The residue at position 2 (alanine 2) is an N-acetylalanine. Residues 2–119 (AATAEVIPAG…IEAKLLKHSQ (118 aa)) form the Thioredoxin domain. An intrachain disulfide couples cysteine 45 to cysteine 48.

This sequence belongs to the thioredoxin family. Plant H-type subfamily.

The protein resides in the cytoplasm. Functionally, participates in various redox reactions through the reversible oxidation of the active center dithiol to a disulfide. The H form is known to activate a number of cytosolic enzymes. This Brassica napus (Rape) protein is Thioredoxin H-type 1 (THL-1).